We begin with the raw amino-acid sequence, 276 residues long: Octanoyltransferase LipM (276 aa).

In terms of domain architecture, BPL/LPL catalytic spans 32–247 (GEVAPTLRFY…GFEDALQLTF (216 aa)). The active-site Acyl-thioester intermediate is the Cys-149.

This sequence belongs to the octanoyltransferase LipM family. In terms of assembly, monomer.

The enzyme catalyses octanoyl-[ACP] + L-lysyl-[protein] = N(6)-octanoyl-L-lysyl-[protein] + holo-[ACP] + H(+). Its pathway is protein modification; protein lipoylation via endogenous pathway; protein N(6)-(lipoyl)lysine from octanoyl-[acyl-carrier-protein]. Its function is as follows. Catalyzes the transfer of endogenously produced octanoic acid from octanoyl-acyl-carrier-protein onto the lipoyl domain of GcvH, an intermediate carrier during protein lipoylation. This is Octanoyltransferase LipM from Exiguobacterium sibiricum (strain DSM 17290 / CCUG 55495 / CIP 109462 / JCM 13490 / 255-15).